The sequence spans 269 residues: 3-deoxy-manno-octulosonate cytidylyltransferase (269 aa).

It belongs to the KdsB family.

The protein resides in the cytoplasm. It carries out the reaction 3-deoxy-alpha-D-manno-oct-2-ulosonate + CTP = CMP-3-deoxy-beta-D-manno-octulosonate + diphosphate. It functions in the pathway nucleotide-sugar biosynthesis; CMP-3-deoxy-D-manno-octulosonate biosynthesis; CMP-3-deoxy-D-manno-octulosonate from 3-deoxy-D-manno-octulosonate and CTP: step 1/1. The protein operates within bacterial outer membrane biogenesis; lipopolysaccharide biosynthesis. Functionally, activates KDO (a required 8-carbon sugar) for incorporation into bacterial lipopolysaccharide in Gram-negative bacteria. In Cupriavidus necator (strain ATCC 17699 / DSM 428 / KCTC 22496 / NCIMB 10442 / H16 / Stanier 337) (Ralstonia eutropha), this protein is 3-deoxy-manno-octulosonate cytidylyltransferase.